The primary structure comprises 419 residues: UDP-N-acetylglucosamine 1-carboxyvinyltransferase (419 aa).

Residue 22–23 (KN) coordinates phosphoenolpyruvate. A UDP-N-acetyl-alpha-D-glucosamine-binding site is contributed by arginine 93. Residue cysteine 117 is the Proton donor of the active site. Cysteine 117 bears the 2-(S-cysteinyl)pyruvic acid O-phosphothioketal mark. Residues aspartate 307 and isoleucine 329 each coordinate UDP-N-acetyl-alpha-D-glucosamine.

Belongs to the EPSP synthase family. MurA subfamily.

The protein localises to the cytoplasm. The enzyme catalyses phosphoenolpyruvate + UDP-N-acetyl-alpha-D-glucosamine = UDP-N-acetyl-3-O-(1-carboxyvinyl)-alpha-D-glucosamine + phosphate. Its pathway is cell wall biogenesis; peptidoglycan biosynthesis. Cell wall formation. Adds enolpyruvyl to UDP-N-acetylglucosamine. This Pseudoalteromonas atlantica (strain T6c / ATCC BAA-1087) protein is UDP-N-acetylglucosamine 1-carboxyvinyltransferase.